The following is a 201-amino-acid chain: Protein OPI10 homolog (201 aa).

This sequence belongs to the OPI10 family.

This Anopheles gambiae (African malaria mosquito) protein is Protein OPI10 homolog.